The chain runs to 146 residues: VHLTADEKAAVSGLWGKVNVDEVGGEALGRLLVVYPWTQRFFTSFGDLSNAAAVMGNSKVKAHGKKVLNSFGEGLKNVDNLKGTFASLSELHCDKLHVDPENFRLLGNVLVIVLARHFGKEFTPQVQGAFQKLALGVATALAHKYH.

Val1 bears the N-acetylvaline mark. The Globin domain maps to 2–146; the sequence is HLTADEKAAV…VATALAHKYH (145 aa). Position 44 is a phosphoserine (Ser44). At Lys59 the chain carries N6-acetyllysine. His63 contacts heme b. Lys82 carries the N6-acetyllysine modification. His92 provides a ligand contact to heme b. Position 93 is an S-nitrosocysteine (Cys93). Lys144 carries the post-translational modification N6-acetyllysine.

This sequence belongs to the globin family. As to quaternary structure, heterotetramer of two alpha chains and two beta chains. As to expression, red blood cells.

Functionally, involved in oxygen transport from the lung to the various peripheral tissues. This is Hemoglobin subunit beta (HBB) from Myotis velifer (Mouse-eared bat).